A 459-amino-acid chain; its full sequence is Bifunctional protein GlmU (459 aa).

The interval M1 to R230 is pyrophosphorylase. Residues L9 to G12, K23, Q73, G78 to T79, S101 to D103, G140, E155, N170, and N228 contribute to the UDP-N-acetyl-alpha-D-glucosamine site. D103 provides a ligand contact to Mg(2+). Residue N228 coordinates Mg(2+). The interval V231–D251 is linker. Residues G252–D459 are N-acetyltransferase. UDP-N-acetyl-alpha-D-glucosamine is bound by residues R333 and K351. The Proton acceptor role is filled by H363. 2 residues coordinate UDP-N-acetyl-alpha-D-glucosamine: Y366 and N377. Acetyl-CoA contacts are provided by residues N386–Y387, S405, A423, and R440.

In the N-terminal section; belongs to the N-acetylglucosamine-1-phosphate uridyltransferase family. The protein in the C-terminal section; belongs to the transferase hexapeptide repeat family. Homotrimer. It depends on Mg(2+) as a cofactor.

Its subcellular location is the cytoplasm. It catalyses the reaction alpha-D-glucosamine 1-phosphate + acetyl-CoA = N-acetyl-alpha-D-glucosamine 1-phosphate + CoA + H(+). The catalysed reaction is N-acetyl-alpha-D-glucosamine 1-phosphate + UTP + H(+) = UDP-N-acetyl-alpha-D-glucosamine + diphosphate. Its pathway is nucleotide-sugar biosynthesis; UDP-N-acetyl-alpha-D-glucosamine biosynthesis; N-acetyl-alpha-D-glucosamine 1-phosphate from alpha-D-glucosamine 6-phosphate (route II): step 2/2. The protein operates within nucleotide-sugar biosynthesis; UDP-N-acetyl-alpha-D-glucosamine biosynthesis; UDP-N-acetyl-alpha-D-glucosamine from N-acetyl-alpha-D-glucosamine 1-phosphate: step 1/1. It participates in bacterial outer membrane biogenesis; LPS lipid A biosynthesis. Catalyzes the last two sequential reactions in the de novo biosynthetic pathway for UDP-N-acetylglucosamine (UDP-GlcNAc). The C-terminal domain catalyzes the transfer of acetyl group from acetyl coenzyme A to glucosamine-1-phosphate (GlcN-1-P) to produce N-acetylglucosamine-1-phosphate (GlcNAc-1-P), which is converted into UDP-GlcNAc by the transfer of uridine 5-monophosphate (from uridine 5-triphosphate), a reaction catalyzed by the N-terminal domain. In Levilactobacillus brevis (strain ATCC 367 / BCRC 12310 / CIP 105137 / JCM 1170 / LMG 11437 / NCIMB 947 / NCTC 947) (Lactobacillus brevis), this protein is Bifunctional protein GlmU.